The primary structure comprises 1499 residues: Multidrug resistance protein CDR2 (1499 aa).

At 1 to 511 the chain is on the cytoplasmic side; it reads MSTANTSLSQ…NFLRMKGDPS (511 aa). The region spanning 148-402 is the ABC transporter 1 domain; the sequence is FTTEAINKLK…FENMGWKCPQ (255 aa). The next 6 helical transmembrane spans lie at 512–532, 546–566, 596–616, 621–641, 660–680, and 763–783; these read IPLI…SVFF, GALF…ILSL, LPVK…MVNL, GNFF…SHMF, VFLL…YILG, and FGIT…LTEF. At 784–1193 the chain is on the cytoplasmic side; sequence NKGAMQKGEI…TIVQDWRSPG (410 aa). In terms of domain architecture, ABC transporter 2 spans 857–1101; the sequence is FFWRDLTYQV…MINYFEKYGA (245 aa). 893-900 is an ATP binding site; sequence GASGAGKT. 6 consecutive transmembrane segments (helical) span residues 1194 to 1214, 1229 to 1249, 1279 to 1299, 1315 to 1335, 1354 to 1374, and 1465 to 1485; these read YIYS…FSFF, AVFM…PYFV, IPFQ…PVGL, LMWM…QLAI, LCLM…FWIF, and FGIF…FYWL.

Belongs to the ABC transporter superfamily. ABCG family. PDR (TC 3.A.1.205) subfamily.

It localises to the membrane. Multidrug efflux transporter. Confers resistance to azole antifungal agents, to other antifungals (terbinafine, amorolfine) and to a variety of metabolic inhibitors. The chain is Multidrug resistance protein CDR2 (CDR2) from Candida albicans (strain SC5314 / ATCC MYA-2876) (Yeast).